A 644-amino-acid chain; its full sequence is Exoribonuclease 2 (644 aa).

Residues 189 to 516 (RKDLTALDFV…NHRLLKAVIK (328 aa)) form the RNB domain. The S1 motif domain occupies 561–643 (DTRFAAEIVD…ETRSIIARPV (83 aa)).

The protein belongs to the RNR ribonuclease family. RNase II subfamily.

It localises to the cytoplasm. It catalyses the reaction Exonucleolytic cleavage in the 3'- to 5'-direction to yield nucleoside 5'-phosphates.. Its function is as follows. Involved in mRNA degradation. Hydrolyzes single-stranded polyribonucleotides processively in the 3' to 5' direction. The sequence is that of Exoribonuclease 2 from Escherichia coli O157:H7.